Here is a 652-residue protein sequence, read N- to C-terminus: ATP-dependent zinc metalloprotease FtsH (652 aa).

The Cytoplasmic segment spans residues 1-11 (MKKQNNGLIKN). Residues 12-32 (PFLWLLFIFFLVTGFQYFYSG) form a helical membrane-spanning segment. Residues 33-131 (NNSGGSQQIN…EVTVKHESSS (99 aa)) are Extracellular-facing. Residues 132-152 (GIWINLLVSIVPFGILFFFLF) traverse the membrane as a helical segment. Over 153-652 (SMMGNMGGGN…EVKSKMNDEK (500 aa)) the chain is Cytoplasmic. 227-234 (GPPGTGKT) is a binding site for ATP. A Zn(2+)-binding site is contributed by His-449. Glu-450 is a catalytic residue. His-453 and Asp-525 together coordinate Zn(2+). The segment at 628–652 (MPEAVEEESHALSYDEVKSKMNDEK) is disordered. Over residues 634 to 652 (EESHALSYDEVKSKMNDEK) the composition is skewed to basic and acidic residues.

In the central section; belongs to the AAA ATPase family. This sequence in the C-terminal section; belongs to the peptidase M41 family. Homohexamer. The cofactor is Zn(2+).

The protein localises to the cell membrane. Acts as a processive, ATP-dependent zinc metallopeptidase for both cytoplasmic and membrane proteins. Plays a role in the quality control of integral membrane proteins. The chain is ATP-dependent zinc metalloprotease FtsH from Streptococcus pneumoniae serotype 4 (strain ATCC BAA-334 / TIGR4).